We begin with the raw amino-acid sequence, 259 residues long: Thiazole synthase (259 aa).

Residue Lys98 is the Schiff-base intermediate with DXP of the active site. 1-deoxy-D-xylulose 5-phosphate contacts are provided by residues Gly159, 185-186, and 207-208; these read AG and NS.

Belongs to the ThiG family. As to quaternary structure, homotetramer. Forms heterodimers with either ThiH or ThiS.

It localises to the cytoplasm. It catalyses the reaction [ThiS sulfur-carrier protein]-C-terminal-Gly-aminoethanethioate + 2-iminoacetate + 1-deoxy-D-xylulose 5-phosphate = [ThiS sulfur-carrier protein]-C-terminal Gly-Gly + 2-[(2R,5Z)-2-carboxy-4-methylthiazol-5(2H)-ylidene]ethyl phosphate + 2 H2O + H(+). It functions in the pathway cofactor biosynthesis; thiamine diphosphate biosynthesis. In terms of biological role, catalyzes the rearrangement of 1-deoxy-D-xylulose 5-phosphate (DXP) to produce the thiazole phosphate moiety of thiamine. Sulfur is provided by the thiocarboxylate moiety of the carrier protein ThiS. In vitro, sulfur can be provided by H(2)S. The chain is Thiazole synthase from Chlorobium phaeobacteroides (strain BS1).